We begin with the raw amino-acid sequence, 881 residues long: Protein translocase subunit SecA (881 aa).

Residues Gln-83, 101 to 105 (GEGKT), and Asp-492 contribute to the ATP site.

Belongs to the SecA family.

It is found in the plastid. Its subcellular location is the chloroplast stroma. The protein resides in the chloroplast thylakoid membrane. The catalysed reaction is ATP + H2O + cellular proteinSide 1 = ADP + phosphate + cellular proteinSide 2.. Has a central role in coupling the hydrolysis of ATP to the transfer of proteins across the thylakoid membrane. This is Protein translocase subunit SecA from Emiliania huxleyi (Coccolithophore).